The following is a 461-amino-acid chain: Serine/threonine-protein kinase 4 homolog A (461 aa).

Residues 20 to 273 (FTIVEKLGEG…AEELLKHPFI (254 aa)) form the Protein kinase domain. ATP is bound by residues 26-34 (LGEGSYGSV) and Lys-49. Asp-139 acts as the Proton acceptor in catalysis. Thr-173 carries the phosphothreonine; by autocatalysis modification. Disordered stretches follow at residues 303–349 (GIEQ…EEYD) and 369–388 (NDDE…SNKK). Acidic residues predominate over residues 307 to 322 (RDEEEEDEDEDSEDSD). Residues 411–458 (SDKYSSYSLEELKKMLAELEIEREKEVQKTLEKFSINRQALLAVIDEK) enclose the SARAH domain.

This sequence belongs to the protein kinase superfamily. STE Ser/Thr protein kinase family. STE20 subfamily. Mn(2+) serves as cofactor. In terms of processing, undergoes autophosphorylation in the catalytic domain.

Its subcellular location is the cytoplasm. The protein resides in the cytosol. The catalysed reaction is L-seryl-[protein] + ATP = O-phospho-L-seryl-[protein] + ADP + H(+). It catalyses the reaction L-threonyl-[protein] + ATP = O-phospho-L-threonyl-[protein] + ADP + H(+). In terms of biological role, regulates both cAMP signaling during early development and the stress response. Functions as an activator of adenylylcyclase. This is Serine/threonine-protein kinase 4 homolog A (krsA) from Dictyostelium discoideum (Social amoeba).